The following is an 863-amino-acid chain: Leucine--tRNA ligase (863 aa).

The short motif at 42 to 52 is the 'HIGH' region element; that stretch reads PYPSGKIHMGH. Positions 618–622 match the 'KMSKS' region motif; sequence KMSKS. Lysine 621 contributes to the ATP binding site.

This sequence belongs to the class-I aminoacyl-tRNA synthetase family.

It localises to the cytoplasm. The catalysed reaction is tRNA(Leu) + L-leucine + ATP = L-leucyl-tRNA(Leu) + AMP + diphosphate. This chain is Leucine--tRNA ligase, found in Desulfatibacillum aliphaticivorans.